Reading from the N-terminus, the 327-residue chain is MRVVFFGTPQFAVPTLQQLLDAPDVEVMAVVSQPDRRRGRGNQVSASPVKALAIAYDLPVWQPERLRRDPEVLSQLQQTQADAFVVVAYGQLLPAEVLAMPRLGCINVHGSLLPAYRGAAPIQWSLINGDRETGIVTMQMDVGMDTGPMLLRWTTPIALDDNSQTLGDRLATAGAELLLQTLRQLDQGHLTAISQNEAEATYARLLQKEDFQLSWDQSALELHNRIRGLYPGASLPVQGDRLKVLASLPLGLGLLLSAAYADWQDWQPDPAAQPGTVLAIAKSLGPIVATREGALLLLQVQPAGRKPLSGWDWANGLRLQEGLSLLE.

111–114 (SLLP) contacts (6S)-5,6,7,8-tetrahydrofolate.

Belongs to the Fmt family.

It carries out the reaction L-methionyl-tRNA(fMet) + (6R)-10-formyltetrahydrofolate = N-formyl-L-methionyl-tRNA(fMet) + (6S)-5,6,7,8-tetrahydrofolate + H(+). In terms of biological role, attaches a formyl group to the free amino group of methionyl-tRNA(fMet). The formyl group appears to play a dual role in the initiator identity of N-formylmethionyl-tRNA by promoting its recognition by IF2 and preventing the misappropriation of this tRNA by the elongation apparatus. In Synechococcus elongatus (strain ATCC 33912 / PCC 7942 / FACHB-805) (Anacystis nidulans R2), this protein is Methionyl-tRNA formyltransferase.